Reading from the N-terminus, the 296-residue chain is GTPase Era (296 aa).

The region spanning 7 to 174 is the Era-type G domain; that stretch reads RTGFVAIVGR…LEEIAQRLPE (168 aa). Residues 15-22 are G1; the sequence is GRPNVGKS. 15 to 22 contacts GTP; it reads GRPNVGKS. Residues 41–45 are G2; sequence QTTRH. Positions 62 to 65 are G3; sequence DTPG. Residues 62-66 and 123-126 contribute to the GTP site; these read DTPGF and SKID. The interval 123 to 126 is G4; it reads SKID. Residues 153–155 are G5; that stretch reads VSA. In terms of domain architecture, KH type-2 spans 197 to 281; it reads VREKIFRLVG…HLEVYIKVRK (85 aa).

Belongs to the TRAFAC class TrmE-Era-EngA-EngB-Septin-like GTPase superfamily. Era GTPase family. In terms of assembly, monomer.

It localises to the cytoplasm. It is found in the cell inner membrane. Functionally, an essential GTPase that binds both GDP and GTP, with rapid nucleotide exchange. Plays a role in 16S rRNA processing and 30S ribosomal subunit biogenesis and possibly also in cell cycle regulation and energy metabolism. This is GTPase Era from Bordetella avium (strain 197N).